The sequence spans 126 residues: Small ribosomal subunit protein uS13c (126 aa).

Residues Pro-97–Lys-126 form a disordered region. Over residues Gln-101–Lys-126 the composition is skewed to basic residues.

This sequence belongs to the universal ribosomal protein uS13 family. Part of the 30S ribosomal subunit.

Its subcellular location is the plastid. It localises to the chloroplast. In terms of biological role, located at the top of the head of the 30S subunit, it contacts several helices of the 16S rRNA. The sequence is that of Small ribosomal subunit protein uS13c from Porphyra purpurea (Red seaweed).